A 147-amino-acid polypeptide reads, in one-letter code: Ubiquitin-conjugating enzyme E2 D2B (147 aa).

The UBC core domain occupies 1–147 (MALKRIHKEL…AREWTQKYAM (147 aa)). The Glycyl thioester intermediate role is filled by Cys85.

This sequence belongs to the ubiquitin-conjugating enzyme family. Interacts with CNOT4 (via RING domain). As to expression, testis-specific. Mainly expressed in the round spermatids (at protein level).

The catalysed reaction is S-ubiquitinyl-[E1 ubiquitin-activating enzyme]-L-cysteine + [E2 ubiquitin-conjugating enzyme]-L-cysteine = [E1 ubiquitin-activating enzyme]-L-cysteine + S-ubiquitinyl-[E2 ubiquitin-conjugating enzyme]-L-cysteine.. It participates in protein modification; protein ubiquitination. In terms of biological role, catalyzes the covalent attachment of ubiquitin to other proteins. Mediates the selective degradation of short-lived and abnormal proteins. Functions in the E6/E6-AP-induced ubiquitination of p53/TP53. Mediates ubiquitination of PEX5 and SQSTM1 and autoubiquitination of STUB1 and TRAF6. Involved in the signal-induced conjugation and subsequent degradation of NFKBIA, FBXW2-mediated GCM1 ubiquitination and degradation, MDM2-dependent degradation of p53/TP53 and the activation of MAVS in the mitochondria by RIGI in response to viral infection Plays a role in early maturation of the testis. This chain is Ubiquitin-conjugating enzyme E2 D2B (Ube2d2b), found in Rattus norvegicus (Rat).